The chain runs to 847 residues: Guanine nucleotide exchange factor VAV3 (847 aa).

A Calponin-homology (CH) domain is found at 1–119; sequence MEPWKQCAQW…ETLSRLSRTP (119 aa). Tyrosine 141 carries the phosphotyrosine modification. Residues 192-371 enclose the DH domain; it reads IRSCCLAEIK…KDLAQYVNEV (180 aa). One can recognise a PH domain in the interval 400–502; the sequence is RPQGDGEIRI…WLEQFEMALS (103 aa). The Phorbol-ester/DAG-type zinc finger occupies 513–562; it reads FHDFKMHTFTRVTSCKVCQMLLRGTFYQGYLCFKCGARAHKECLGRVDNC. The tract at residues 560-847 is sufficient for interaction with ROS1; it reads DNCGRVNSGE…FPSTYVEEDE (288 aa). Positions 592-660 constitute an SH3 1 domain; it reads PGLPKMQVIR…PSDAVKPCPC (69 aa). An SH2 domain is found at 672–766; it reads WYAGAMERLQ…TLDTTLQFPY (95 aa). The 60-residue stretch at 788-847 folds into the SH3 2 domain; it reads KVLGIAIARYDFCARDMRELSLLKGDVVKIYTKMSANGWWRGEVNGRVGWFPSTYVEEDE.

As to quaternary structure, interacts with the PH domain of SH2B2. Interacts (via SH2 domains) with the phosphorylated form of EPHA2. Interacts with ROS1; constitutive interaction that mediates VAV3 phosphorylation. Post-translationally, phosphorylated. Phosphorylation can be mediated by ROS1. In osteoclasts, undergoes tyrosine phosphorylation in response to CSF1. In terms of tissue distribution, isoform 1 and isoform 3 are widely expressed; both are expressed at very low levels in skeletal muscle. In keratinocytes, isoform 1 is less abundant than isoform 3. Isoform 3 is detected at very low levels, if any, in adrenal gland, bone marrow, spleen, fetal brain and spinal cord; in these tissues, isoform 1 is readily detectable.

Functionally, exchange factor for GTP-binding proteins RhoA, RhoG and, to a lesser extent, Rac1. Binds physically to the nucleotide-free states of those GTPases. Plays an important role in angiogenesis. Its recruitment by phosphorylated EPHA2 is critical for EFNA1-induced RAC1 GTPase activation and vascular endothelial cell migration and assembly. May be important for integrin-mediated signaling, at least in some cell types. In osteoclasts, along with SYK tyrosine kinase, required for signaling through integrin alpha-v/beta-1 (ITAGV-ITGB1), a crucial event for osteoclast proper cytoskeleton organization and function. This signaling pathway involves RAC1, but not RHO, activation. Necessary for proper wound healing. In the course of wound healing, required for the phagocytotic cup formation preceding macrophage phagocytosis of apoptotic neutrophils. Responsible for integrin beta-2 (ITGB2)-mediated macrophage adhesion and, to a lesser extent, contributes to beta-3 (ITGB3)-mediated adhesion. Does not affect integrin beta-1 (ITGB1)-mediated adhesion. The chain is Guanine nucleotide exchange factor VAV3 (VAV3) from Homo sapiens (Human).